Consider the following 441-residue polypeptide: 23S rRNA (uracil(1939)-C(5))-methyltransferase RlmD (441 aa).

The 59-residue stretch at 10–68 (KPLKQQSLVLDITAMDHHGRGIAKHNNKVCFVSNALPNEQVKATIIADKARYSEAQTHK) folds into the TRAM domain. [4Fe-4S] cluster contacts are provided by Cys81, Cys87, Cys90, and Cys169. Residues Gln274, Phe303, Asn308, Glu324, Asp351, and Asp372 each contribute to the S-adenosyl-L-methionine site. The active-site Nucleophile is Cys398.

This sequence belongs to the class I-like SAM-binding methyltransferase superfamily. RNA M5U methyltransferase family. RlmD subfamily.

It catalyses the reaction uridine(1939) in 23S rRNA + S-adenosyl-L-methionine = 5-methyluridine(1939) in 23S rRNA + S-adenosyl-L-homocysteine + H(+). Its function is as follows. Catalyzes the formation of 5-methyl-uridine at position 1939 (m5U1939) in 23S rRNA. This is 23S rRNA (uracil(1939)-C(5))-methyltransferase RlmD from Pseudoalteromonas translucida (strain TAC 125).